We begin with the raw amino-acid sequence, 428 residues long: GTPase Obg (428 aa).

The region spanning 1–158 (MFIDQVKIYV…RDVILELKVL (158 aa)) is the Obg domain. In terms of domain architecture, OBG-type G spans 159 to 329 (ADVGLVGFPS…LLFEVANLIE (171 aa)). GTP contacts are provided by residues 165–172 (GFPSVGKS), 190–194 (FTTIV), 212–215 (DLPG), 282–285 (NKMD), and 310–312 (SAV). Mg(2+) contacts are provided by Ser172 and Thr192. The OCT domain occupies 350-428 (KFETEGVKFD…ILEYEFEFID (79 aa)).

Belongs to the TRAFAC class OBG-HflX-like GTPase superfamily. OBG GTPase family. In terms of assembly, monomer. Requires Mg(2+) as cofactor.

It is found in the cytoplasm. In terms of biological role, an essential GTPase which binds GTP, GDP and possibly (p)ppGpp with moderate affinity, with high nucleotide exchange rates and a fairly low GTP hydrolysis rate. Plays a role in control of the cell cycle, stress response, ribosome biogenesis and in those bacteria that undergo differentiation, in morphogenesis control. This Bacillus anthracis protein is GTPase Obg.